The chain runs to 112 residues: Urocortin-2 (112 aa).

A signal peptide spans 1–22; it reads MTRCALLLLMVLMLGRVLVVPV. Residues 23–70 constitute a propeptide that is removed on maturation; sequence TPIPTFQLRPQNSPQTTPRPAASESPSAAPTWPWAAQSHCSPTRHPGS. The tract at residues 27–66 is disordered; it reads TFQLRPQNSPQTTPRPAASESPSAAPTWPWAAQSHCSPTR. Low complexity predominate over residues 38–58; the sequence is TTPRPAASESPSAAPTWPWAA.

The protein belongs to the sauvagine/corticotropin-releasing factor/urotensin I family. Binds with high affinity to CRF receptors 2-alpha and 2-beta. In terms of processing, glycosylated.

Its subcellular location is the secreted. Functionally, suppresses food intake, delays gastric emptying and decreases heat-induced edema. Might represent an endogenous ligand for maintaining homeostasis after stress. The chain is Urocortin-2 (UCN2) from Homo sapiens (Human).